The chain runs to 237 residues: Phosphoribosylaminoimidazole-succinocarboxamide synthase (237 aa).

Belongs to the SAICAR synthetase family.

It carries out the reaction 5-amino-1-(5-phospho-D-ribosyl)imidazole-4-carboxylate + L-aspartate + ATP = (2S)-2-[5-amino-1-(5-phospho-beta-D-ribosyl)imidazole-4-carboxamido]succinate + ADP + phosphate + 2 H(+). Its pathway is purine metabolism; IMP biosynthesis via de novo pathway; 5-amino-1-(5-phospho-D-ribosyl)imidazole-4-carboxamide from 5-amino-1-(5-phospho-D-ribosyl)imidazole-4-carboxylate: step 1/2. The sequence is that of Phosphoribosylaminoimidazole-succinocarboxamide synthase from Photorhabdus laumondii subsp. laumondii (strain DSM 15139 / CIP 105565 / TT01) (Photorhabdus luminescens subsp. laumondii).